Consider the following 353-residue polypeptide: Holliday junction branch migration complex subunit RuvB (353 aa).

Residues 1–183 (MNEPRIVAPQ…FGATYRLDFY (183 aa)) are large ATPase domain (RuvB-L). Residues Leu22, Arg23, Gly64, Lys67, Thr68, Thr69, 130 to 132 (EDF), Arg173, Tyr183, and Arg220 contribute to the ATP site. Residue Thr68 participates in Mg(2+) binding. The small ATPAse domain (RuvB-S) stretch occupies residues 184-254 (DTAALRAIVE…LARLALDQLA (71 aa)). The segment at 257–353 (ELGLDEVDRL…HAASERSSDA (97 aa)) is head domain (RuvB-H). Positions 312 and 317 each coordinate DNA.

It belongs to the RuvB family. Homohexamer. Forms an RuvA(8)-RuvB(12)-Holliday junction (HJ) complex. HJ DNA is sandwiched between 2 RuvA tetramers; dsDNA enters through RuvA and exits via RuvB. An RuvB hexamer assembles on each DNA strand where it exits the tetramer. Each RuvB hexamer is contacted by two RuvA subunits (via domain III) on 2 adjacent RuvB subunits; this complex drives branch migration. In the full resolvosome a probable DNA-RuvA(4)-RuvB(12)-RuvC(2) complex forms which resolves the HJ.

Its subcellular location is the cytoplasm. It carries out the reaction ATP + H2O = ADP + phosphate + H(+). Its function is as follows. The RuvA-RuvB-RuvC complex processes Holliday junction (HJ) DNA during genetic recombination and DNA repair, while the RuvA-RuvB complex plays an important role in the rescue of blocked DNA replication forks via replication fork reversal (RFR). RuvA specifically binds to HJ cruciform DNA, conferring on it an open structure. The RuvB hexamer acts as an ATP-dependent pump, pulling dsDNA into and through the RuvAB complex. RuvB forms 2 homohexamers on either side of HJ DNA bound by 1 or 2 RuvA tetramers; 4 subunits per hexamer contact DNA at a time. Coordinated motions by a converter formed by DNA-disengaged RuvB subunits stimulates ATP hydrolysis and nucleotide exchange. Immobilization of the converter enables RuvB to convert the ATP-contained energy into a lever motion, pulling 2 nucleotides of DNA out of the RuvA tetramer per ATP hydrolyzed, thus driving DNA branch migration. The RuvB motors rotate together with the DNA substrate, which together with the progressing nucleotide cycle form the mechanistic basis for DNA recombination by continuous HJ branch migration. Branch migration allows RuvC to scan DNA until it finds its consensus sequence, where it cleaves and resolves cruciform DNA. The chain is Holliday junction branch migration complex subunit RuvB from Thermomicrobium roseum (strain ATCC 27502 / DSM 5159 / P-2).